The chain runs to 266 residues: Orotidine 5'-phosphate decarboxylase (266 aa).

Substrate is bound by residues D38, K60–H62, D92–T101, Y218, and R236. K94 acts as the Proton donor in catalysis.

This sequence belongs to the OMP decarboxylase family.

The catalysed reaction is orotidine 5'-phosphate + H(+) = UMP + CO2. The protein operates within pyrimidine metabolism; UMP biosynthesis via de novo pathway; UMP from orotate: step 2/2. The chain is Orotidine 5'-phosphate decarboxylase (URA3) from Candida maltosa (Yeast).